A 185-amino-acid chain; its full sequence is Large ribosomal subunit protein uL5 (185 aa).

The protein belongs to the universal ribosomal protein uL5 family. As to quaternary structure, part of the 50S ribosomal subunit; part of the 5S rRNA/L5/L18/L25 subcomplex. Contacts the 5S rRNA and the P site tRNA. Forms a bridge to the 30S subunit in the 70S ribosome.

Its function is as follows. This is one of the proteins that bind and probably mediate the attachment of the 5S RNA into the large ribosomal subunit, where it forms part of the central protuberance. In the 70S ribosome it contacts protein S13 of the 30S subunit (bridge B1b), connecting the 2 subunits; this bridge is implicated in subunit movement. Contacts the P site tRNA; the 5S rRNA and some of its associated proteins might help stabilize positioning of ribosome-bound tRNAs. This chain is Large ribosomal subunit protein uL5, found in Rhizobium johnstonii (strain DSM 114642 / LMG 32736 / 3841) (Rhizobium leguminosarum bv. viciae).